Consider the following 361-residue polypeptide: Protein-glutamate methylesterase/protein-glutamine glutaminase 1 (361 aa).

The region spanning 10 to 127 is the Response regulatory domain; sequence KVLVVDDSAL…REGIEEKAQE (118 aa). 4-aspartylphosphate is present on aspartate 61. In terms of domain architecture, CheB-type methylesterase spans 167-359; that stretch reads FATTDKLIAV…ASVKRWYAEN (193 aa). Catalysis depends on residues serine 179, histidine 205, and aspartate 301.

It belongs to the CheB family. Post-translationally, phosphorylated by CheA. Phosphorylation of the N-terminal regulatory domain activates the methylesterase activity.

Its subcellular location is the cytoplasm. It catalyses the reaction [protein]-L-glutamate 5-O-methyl ester + H2O = L-glutamyl-[protein] + methanol + H(+). The catalysed reaction is L-glutaminyl-[protein] + H2O = L-glutamyl-[protein] + NH4(+). Functionally, involved in chemotaxis. Part of a chemotaxis signal transduction system that modulates chemotaxis in response to various stimuli. Catalyzes the demethylation of specific methylglutamate residues introduced into the chemoreceptors (methyl-accepting chemotaxis proteins or MCP) by CheR. Also mediates the irreversible deamidation of specific glutamine residues to glutamic acid. This chain is Protein-glutamate methylesterase/protein-glutamine glutaminase 1, found in Hahella chejuensis (strain KCTC 2396).